The sequence spans 148 residues: 3-dehydroquinate dehydratase (148 aa).

Tyrosine 26 (proton acceptor) is an active-site residue. The substrate site is built by asparagine 77, histidine 83, and aspartate 90. Histidine 103 functions as the Proton donor in the catalytic mechanism. Substrate contacts are provided by residues 104–105 and arginine 114; that span reads LS.

This sequence belongs to the type-II 3-dehydroquinase family. In terms of assembly, homododecamer.

It carries out the reaction 3-dehydroquinate = 3-dehydroshikimate + H2O. It participates in metabolic intermediate biosynthesis; chorismate biosynthesis; chorismate from D-erythrose 4-phosphate and phosphoenolpyruvate: step 3/7. Catalyzes a trans-dehydration via an enolate intermediate. This chain is 3-dehydroquinate dehydratase (aroQ), found in Pasteurella multocida (strain Pm70).